Consider the following 708-residue polypeptide: Glycine--tRNA ligase beta subunit (708 aa).

Belongs to the class-II aminoacyl-tRNA synthetase family. In terms of assembly, tetramer of two alpha and two beta subunits.

Its subcellular location is the cytoplasm. The enzyme catalyses tRNA(Gly) + glycine + ATP = glycyl-tRNA(Gly) + AMP + diphosphate. The chain is Glycine--tRNA ligase beta subunit from Methylobacillus flagellatus (strain ATCC 51484 / DSM 6875 / VKM B-1610 / KT).